A 151-amino-acid chain; its full sequence is Ribosome maturation factor RimP (151 aa).

The protein belongs to the RimP family.

It localises to the cytoplasm. Its function is as follows. Required for maturation of 30S ribosomal subunits. The polypeptide is Ribosome maturation factor RimP (Shewanella sp. (strain MR-4)).